The following is a 415-amino-acid chain: Arrestin red cell isoform 3 (415 aa).

The protein belongs to the arrestin family.

It is found in the cytoplasm. The sequence is that of Arrestin red cell isoform 3 from Oncorhynchus mykiss (Rainbow trout).